The primary structure comprises 459 residues: MSKVWSNRFESSLNPFIEEFNASIGFDKTLIFEDIDCSIAHAKMLGKTKVLSADESQKIIEGLENIKQDFIKGEFSPGAPSEDIHYSIEEKLIDLIGDTGKKLHTGRSRNDQVGTDIRLWLRKKIDTIDNLLAELQNSLFAVAESNIYTLIPGYTHMQRAQPLSLAHHFLAYLEMFQRDRERLREVRARVNISPLGAAALAGTKIKIDRYFTASELGFDNIYKNSIDAVSDRDFCIEFASASALIMSHLSRISEEIILWVTDEFSFAKLTDKCATGSSLMPQKKNPDVPELIRGKTGRVYGNLHTLLTLIKGVPLAYNKDFQEDKEPIFDTVDTISSCLKAMRILLDEGIEFNVDKLIDSVNNDFSNATDLADYLVSKQVPFRKAYQIVGDIVKYCLTKNILFKDLNLSEFQTFHDEFKEDIYENLNPMNVVKSRNSVGGTGFEQVEIELNNWKKKLFT.

The protein belongs to the lyase 1 family. Argininosuccinate lyase subfamily.

The protein resides in the cytoplasm. It catalyses the reaction 2-(N(omega)-L-arginino)succinate = fumarate + L-arginine. It functions in the pathway amino-acid biosynthesis; L-arginine biosynthesis; L-arginine from L-ornithine and carbamoyl phosphate: step 3/3. The chain is Argininosuccinate lyase from Prochlorococcus marinus (strain MIT 9515).